The sequence spans 150 residues: Large ribosomal subunit protein bL9 (150 aa).

The protein belongs to the bacterial ribosomal protein bL9 family.

Binds to the 23S rRNA. The chain is Large ribosomal subunit protein bL9 from Ruthia magnifica subsp. Calyptogena magnifica.